A 508-amino-acid polypeptide reads, in one-letter code: MVIIWNIFLPAFLLVLAKASLRSSRDSANCKLNKKQSQLNSFLWTIKRDPPSYFFGTIHVPYTRVWDFIPENSKTAFQQSNIVYFELDLTDPYTISALTSCQMLPQGENLQNVLPRDIYRRLKRHLEYVKLMMPSWMTPDQRGKGLYADYLFNAIAGNWERKRPVWVMLMVNSLTEVDIKSRGVPVLDLYLAQEAERLKKRTGAVEQVEEQCHPLNGLNLSQVIFALNQTLLQQENLRAGSVQVPYSTEDLIKHYNCGDLNSIIFNHDSSQVPNFINSTLPPQERITAQEIDNYFRQELIYKRNERMGKRVKDLLEQFPEKSFFFAFGAGHFLGNNTVIDVLKRYGYDVLHTPAGRSIINNGKGKKNLLPSKFSSSSLPVGLSAPPCTVTSRIKQSINSHKDQESLPDILLDDDIDQLDKDERKYKKRKQRKEKHRHFSDLWVRIQESSTDTTPQIRIINGYITVEPHPREHGKDKYIKAAQSVSFSLSIPSAFLLLAWCFQQVAVLQ.

The first 23 residues, 1 to 23 (MVIIWNIFLPAFLLVLAKASLRS), serve as a signal peptide directing secretion. Over 24–485 (SRDSANCKLN…KYIKAAQSVS (462 aa)) the chain is Extracellular. 4 N-linked (GlcNAc...) asparagine glycosylation sites follow: asparagine 219, asparagine 228, asparagine 277, and asparagine 335. Residues 486-506 (FSLSIPSAFLLLAWCFQQVAV) traverse the membrane as a helical segment. Residues 507–508 (LQ) are Cytoplasmic-facing.

This sequence belongs to the TIKI family. Requires Mn(2+) as cofactor. It depends on Co(2+) as a cofactor. In terms of tissue distribution, zygotically expressed in the Spemann-Mangold organizer, in particular in the head Spemann-Mangold organizer region responsible for anterior patterning.

The protein localises to the cell membrane. Its function is as follows. Metalloprotease that acts as a negative regulator of the Wnt signaling pathway: expressed in the Spemann-Mangold organizer and is required for anterior-neural patterning in head formation in embryos. Acts by mediating the cleavage of the N-terminal residues of a subset of Wnt proteins. Following cleavage, Wnt proteins become oxidized and form large disulfide-bond oligomers, leading to their inactivation. Able to cleave wnt8. The sequence is that of Metalloprotease TIKI1 (trabd2a) from Xenopus tropicalis (Western clawed frog).